A 74-amino-acid polypeptide reads, in one-letter code: Protein SspS (74 aa).

It belongs to the alpha/beta-type SASP family.

In Streptococcus pyogenes, this protein is Protein SspS (sspS).